Reading from the N-terminus, the 224-residue chain is UPF0758 protein Mmwyl1_0624 (224 aa).

The region spanning Val-102–Val-224 is the MPN domain. The Zn(2+) site is built by His-173, His-175, and Asp-186. The short motif at His-173–Asp-186 is the JAMM motif element.

The protein belongs to the UPF0758 family.

The protein is UPF0758 protein Mmwyl1_0624 of Marinomonas sp. (strain MWYL1).